The following is a 337-amino-acid chain: Diacylglycerol O-acyltransferase 2-like protein 6 (337 aa).

A run of 2 helical transmembrane segments spans residues 22–42 and 102–122; these read IPVY…FLLF and YIIA…NFAT.

The protein belongs to the diacylglycerol acyltransferase family. Expressed in all tissues tested except pancreas.

Its subcellular location is the endoplasmic reticulum membrane. The enzyme catalyses 1,2-di-(9Z-octadecenoyl)-sn-glycerol + (9Z)-octadecenoyl-CoA = 1,2,3-tri-(9Z-octadecenoyl)-glycerol + CoA. The catalysed reaction is 1-O-(9Z-octadecenyl)-glycerol + (9Z)-octadecenoyl-CoA = 1-O-(9Z-octadecyl)-3-(9Z-octadecenoyl)-glycerol + CoA. It carries out the reaction 1-(9Z-octadecenoyl)-glycerol + (9Z)-octadecenoyl-CoA = 1,2-di-(9Z-octadecenoyl)-glycerol + CoA. Diglyceride acyltransferase that uses fatty acyl-CoA as substrate. Particularly active with oleate as a substrate. Has no wax synthase activity to produce wax esters. Able to use 1-monoalkylglycerol (1-MAkG) as an acyl acceptor for the synthesis of monoalkyl-monoacylglycerol (MAMAG). The chain is Diacylglycerol O-acyltransferase 2-like protein 6 from Homo sapiens (Human).